We begin with the raw amino-acid sequence, 195 residues long: Imidazoleglycerol-phosphate dehydratase (195 aa).

Belongs to the imidazoleglycerol-phosphate dehydratase family.

Its subcellular location is the cytoplasm. It catalyses the reaction D-erythro-1-(imidazol-4-yl)glycerol 3-phosphate = 3-(imidazol-4-yl)-2-oxopropyl phosphate + H2O. It participates in amino-acid biosynthesis; L-histidine biosynthesis; L-histidine from 5-phospho-alpha-D-ribose 1-diphosphate: step 6/9. The chain is Imidazoleglycerol-phosphate dehydratase from Polynucleobacter necessarius subsp. necessarius (strain STIR1).